The chain runs to 207 residues: Small ribosomal subunit protein uS10m (207 aa).

The transit peptide at 1–24 directs the protein to the mitochondrion; the sequence is MLSVFGLRTVARCNSTLASGGARA.

The protein belongs to the universal ribosomal protein uS10 family. In terms of assembly, part of the mitochondrial small ribosomal subunit.

It localises to the mitochondrion. Its function is as follows. Involved in mitochondrial genome encoded proteins translation. Involved in the binding of tRNA to the ribosomes. The chain is Small ribosomal subunit protein uS10m (RSM10) from Eremothecium gossypii (strain ATCC 10895 / CBS 109.51 / FGSC 9923 / NRRL Y-1056) (Yeast).